Here is a 200-residue protein sequence, read N- to C-terminus: ATP-dependent Clp protease proteolytic subunit 1 (200 aa).

Catalysis depends on Ser98, which acts as the Nucleophile. Residue His123 is part of the active site.

It belongs to the peptidase S14 family. In terms of assembly, fourteen ClpP subunits assemble into 2 heptameric rings which stack back to back to give a disk-like structure with a central cavity, resembling the structure of eukaryotic proteasomes.

It localises to the cytoplasm. It catalyses the reaction Hydrolysis of proteins to small peptides in the presence of ATP and magnesium. alpha-casein is the usual test substrate. In the absence of ATP, only oligopeptides shorter than five residues are hydrolyzed (such as succinyl-Leu-Tyr-|-NHMec, and Leu-Tyr-Leu-|-Tyr-Trp, in which cleavage of the -Tyr-|-Leu- and -Tyr-|-Trp bonds also occurs).. Its function is as follows. Cleaves peptides in various proteins in a process that requires ATP hydrolysis. Has a chymotrypsin-like activity. Plays a major role in the degradation of misfolded proteins. This chain is ATP-dependent Clp protease proteolytic subunit 1, found in Mycobacterium leprae (strain TN).